Consider the following 235-residue polypeptide: BPI fold-containing family A member 2 (235 aa).

Positions 1–20 (MFQLGSLVVLCGLLIGNSES) are cleaved as a signal peptide. C161 and C204 are joined by a disulfide.

It belongs to the BPI/LBP/Plunc superfamily. Plunc family. As to expression, predominates in the parotid glands, present in smaller amounts (1/10) in the submaxillary glands and in the sublingual glands, and at lower amount in the pancreas but undetectable in the liver. Found also in lacrimal gland.

Its subcellular location is the secreted. In terms of biological role, has strong antibacterial activity against P.aeruginosa. In Mus musculus (Mouse), this protein is BPI fold-containing family A member 2 (Bpifa2).